Consider the following 268-residue polypeptide: NH(3)-dependent NAD(+) synthetase (268 aa).

46-53 (GVSGGQDS) contributes to the ATP binding site. D52 provides a ligand contact to Mg(2+). Position 140 (R140) interacts with deamido-NAD(+). Position 160 (T160) interacts with ATP. E165 contributes to the Mg(2+) binding site. Deamido-NAD(+) contacts are provided by K173 and D180. Residue K189 coordinates ATP. A deamido-NAD(+)-binding site is contributed by 260 to 261 (HK).

Belongs to the NAD synthetase family. As to quaternary structure, homodimer.

It catalyses the reaction deamido-NAD(+) + NH4(+) + ATP = AMP + diphosphate + NAD(+) + H(+). It participates in cofactor biosynthesis; NAD(+) biosynthesis; NAD(+) from deamido-NAD(+) (ammonia route): step 1/1. Its function is as follows. Catalyzes the ATP-dependent amidation of deamido-NAD to form NAD. Uses ammonia as a nitrogen source. The protein is NH(3)-dependent NAD(+) synthetase of Buchnera aphidicola subsp. Acyrthosiphon pisum (strain APS) (Acyrthosiphon pisum symbiotic bacterium).